The sequence spans 40 residues: Beta-defensin 1 (40 aa).

3 cysteine pairs are disulfide-bonded: C7/C35, C14/C29, and C19/C36. At G40 the chain carries Glycine amide.

In terms of assembly, monomer. Homodimer.

The protein resides in the secreted. It localises to the membrane. Functionally, has antimicrobial activity against the Gram-positive bacteria methicillin-resistant S.aureus ATCC 33591 and L.monocytogenes EGD, the Gram-negative bacterium E.coli ML53p and the yeast C.albicans 820. Has no hemolytic activity towards human erythrocytes. The sequence is that of Beta-defensin 1 from Emys orbicularis (European pond turtle).